The sequence spans 715 residues: Polyribonucleotide nucleotidyltransferase (715 aa).

Residues aspartate 488 and aspartate 494 each coordinate Mg(2+). In terms of domain architecture, KH spans proline 555–isoleucine 614. The S1 motif domain occupies glycine 624–lysine 692.

Belongs to the polyribonucleotide nucleotidyltransferase family. The cofactor is Mg(2+).

The protein localises to the cytoplasm. It carries out the reaction RNA(n+1) + phosphate = RNA(n) + a ribonucleoside 5'-diphosphate. Functionally, involved in mRNA degradation. Catalyzes the phosphorolysis of single-stranded polyribonucleotides processively in the 3'- to 5'-direction. The sequence is that of Polyribonucleotide nucleotidyltransferase from Chelativorans sp. (strain BNC1).